A 429-amino-acid polypeptide reads, in one-letter code: Metacaspase-1A (429 aa).

Residues 1-68 (MQHHHQGSYG…PQHNGGQMYG (68 aa)) are disordered. The segment covering 8 to 19 (SYGGGGGGGGYP) has biased composition (gly residues). Residues 20-45 (GQAYREQNPYGYGQQSPQQGYGAPQQ) show a composition bias toward low complexity. A compositionally biased stretch (polar residues) spans 46 to 62 (HNGYNQPPSGYGQPQHN). Active-site residues include H220 and C276.

This sequence belongs to the peptidase C14B family.

Functionally, involved in cell death (apoptosis). The polypeptide is Metacaspase-1A (casA) (Aspergillus clavatus (strain ATCC 1007 / CBS 513.65 / DSM 816 / NCTC 3887 / NRRL 1 / QM 1276 / 107)).